The chain runs to 178 residues: Large ribosomal subunit protein eL20x (178 aa).

This sequence belongs to the eukaryotic ribosomal protein eL20 family.

The chain is Large ribosomal subunit protein eL20x (RPL18AC) from Arabidopsis thaliana (Mouse-ear cress).